We begin with the raw amino-acid sequence, 202 residues long: uncharacterized protein (202 aa).

The Cytoplasmic segment spans residues 1–6 (MITDFL). Residues 7 to 23 (LAFSILAVSTTLGVSNL) traverse the membrane as a helical; Signal-anchor for type II membrane protein segment. At 24 to 202 (NKQCRDLLQC…KNGKTRGHSG (179 aa)) the chain is on the extracellular side. The N-linked (GlcNAc...) asparagine glycan is linked to N53.

It localises to the membrane. This is an uncharacterized protein from Caenorhabditis elegans.